Reading from the N-terminus, the 480-residue chain is Ochratoxinase (480 aa).

Positions 111, 113, 246, 287, and 307 each coordinate Zn(2+). The active site involves lysine 246. Aspartate 378 is an active-site residue.

The protein belongs to the metallo-dependent hydrolases superfamily. Ochratoxinase amidase 2 family. As to quaternary structure, homooctamer. Requires Zn(2+) as cofactor.

The protein resides in the secreted. It carries out the reaction ochratoxin A + H2O = ochratoxin alpha + L-phenylalanine. With respect to regulation, the Zn(2+)-specific chelator 1,10-phenanthroline inhibits the enzyme activity. Functionally, carboxypeptidase that catalyzes the release of a C-terminal amino acid with specific catalytic activity for aromatic amino acids such as phenylalanine. Is able to degrade ochratoxin A, one of the five major mycotoxins most harmful to humans and animals that is produced by Aspergillus and Penicillium species and occurs in a wide range of agricultural products. The protein is Ochratoxinase of Aspergillus niger (strain ATCC MYA-4892 / CBS 513.88 / FGSC A1513).